Here is a 102-residue protein sequence, read N- to C-terminus: Acid shock protein (102 aa).

Positions 1–21 (MKKVLGLVVAAAMGLSSAAFA) are cleaved as a signal peptide. A compositionally biased stretch (low complexity) spans 22–41 (AETATTPAPTATTTKAAPAK). The propeptide occupies 22–58 (AETATTPAPTATTTKAAPAKTTHHKKQHKAAPAQKAQ). The interval 22–102 (AETATTPAPT…PAKPAAQPAA (81 aa)) is disordered. Residues 80–90 (AAKKHAGKHSH) are compositionally biased toward basic residues. The span at 91-102 (QQPAKPAAQPAA) shows a compositional bias: low complexity.

The protein belongs to the Asr family. Proteolytic processing gives rise to the active protein.

It is found in the periplasm. Required for growth and/or survival at acidic conditions. The polypeptide is Acid shock protein (Escherichia coli (strain SE11)).